Here is a 435-residue protein sequence, read N- to C-terminus: Gamma-glutamyl phosphate reductase (435 aa).

It belongs to the gamma-glutamyl phosphate reductase family.

The protein localises to the cytoplasm. It carries out the reaction L-glutamate 5-semialdehyde + phosphate + NADP(+) = L-glutamyl 5-phosphate + NADPH + H(+). It participates in amino-acid biosynthesis; L-proline biosynthesis; L-glutamate 5-semialdehyde from L-glutamate: step 2/2. Functionally, catalyzes the NADPH-dependent reduction of L-glutamate 5-phosphate into L-glutamate 5-semialdehyde and phosphate. The product spontaneously undergoes cyclization to form 1-pyrroline-5-carboxylate. The polypeptide is Gamma-glutamyl phosphate reductase (Aquifex aeolicus (strain VF5)).